Consider the following 462-residue polypeptide: S-alkyl-thiohydroximate lyase SUR1 (462 aa).

The protein belongs to the class-I pyridoxal-phosphate-dependent aminotransferase family. Pyridoxal 5'-phosphate serves as cofactor.

Functionally, C-S lyase involved in glucosinolate biosynthesis. Converts S-(alkylacetohydroximoyl)-L-cysteine to thiohydroximate. Functions in auxin homeostasis. Probably required for glucosinolate activation in response to pathogens. The chain is S-alkyl-thiohydroximate lyase SUR1 (SUR1) from Arabidopsis thaliana (Mouse-ear cress).